The primary structure comprises 471 residues: Putative multidrug resistance protein MdtD (471 aa).

At Met1 to Gln11 the chain is on the periplasmic side. The helical transmembrane segment at Leu12–Ala32 threads the bilayer. Residues Leu33–His48 are Cytoplasmic-facing. Residues Met49–Ala69 traverse the membrane as a helical segment. Topologically, residues Asp70–Asn76 are periplasmic. Residues Ile77–Thr97 traverse the membrane as a helical segment. Over Leu98–Leu101 the chain is Cytoplasmic. The helical transmembrane segment at Leu102–Met124 threads the bilayer. The Periplasmic segment spans residues Lys125–Thr137. A helical membrane pass occupies residues Phe138–Val158. At Glu159–His164 the chain is on the cytoplasmic side. A helical transmembrane segment spans residues Trp165–Met185. The Periplasmic segment spans residues Pro186–Asp196. Residues Leu197–Ser217 traverse the membrane as a helical segment. Topologically, residues Lys218–Pro224 are cytoplasmic. A helical membrane pass occupies residues Leu225–Ala245. The Periplasmic segment spans residues Arg246 to Thr262. Residues Phe263–Met283 traverse the membrane as a helical segment. Topologically, residues Thr284 to Pro285 are cytoplasmic. A helical membrane pass occupies residues Val286–Met306. Residues Val307–Thr341 are Periplasmic-facing. The helical transmembrane segment at Leu342 to Leu362 threads the bilayer. The Cytoplasmic segment spans residues Gln363–Ser395. Residues Met396–Phe416 form a helical membrane-spanning segment. Over Gly417–Thr430 the chain is Periplasmic. The chain crosses the membrane as a helical span at residues Val431–Ala451. Residues Arg452–Gln471 lie on the Cytoplasmic side of the membrane.

It belongs to the major facilitator superfamily. TCR/Tet family.

The protein resides in the cell inner membrane. The protein is Putative multidrug resistance protein MdtD of Escherichia coli O127:H6 (strain E2348/69 / EPEC).